The following is a 331-amino-acid chain: Benzylsuccinate synthase activating enzyme (331 aa).

Positions 15–315 (QDGPGIRTTI…VTIGGIVGIA (301 aa)) constitute a Radical SAM core domain. Residues C29, C33, C36, C55, C58, C61, C65, C89, C92, C95, and C99 each contribute to the [4Fe-4S] cluster site. 35–37 (WCH) lines the S-adenosyl-L-methionine pocket. 4Fe-4S ferredoxin-type domains lie at 46–75 (QEFY…LVRN) and 80–109 (TIVQ…IVGQ). S-adenosyl-L-methionine is bound by residues G139, 189 to 191 (DLK), and H263.

This sequence belongs to the organic radical-activating enzymes family. [4Fe-4S] cluster is required as a cofactor.

The catalysed reaction is glycyl-[protein] + reduced [flavodoxin] + S-adenosyl-L-methionine = glycin-2-yl radical-[protein] + semiquinone [flavodoxin] + 5'-deoxyadenosine + L-methionine + H(+). The protein operates within xenobiotic degradation; toluene degradation [regulation]. Functionally, activation of benzylsuccinate synthase under anaerobic conditions by generation of an organic free radical, using S-adenosylmethionine and reduced flavodoxin as cosubstrates to produce 5'-deoxy-adenosine. The protein is Benzylsuccinate synthase activating enzyme (bssD) of Thauera aromatica.